Reading from the N-terminus, the 255-residue chain is uncharacterized protein (255 aa).

Positions 1–23 are cleaved as a signal peptide; sequence MKRLNKLVLYISFLILVISFTAG. C24 carries the N-palmitoyl cysteine lipid modification. A lipid anchor (S-diacylglycerol cysteine) is attached at C24.

The protein belongs to the staphylococcal tandem lipoprotein family.

It localises to the cell membrane. This is an uncharacterized protein from Staphylococcus aureus (strain NCTC 8325 / PS 47).